The primary structure comprises 67 residues: Small ribosomal subunit protein eS17 (67 aa).

The protein belongs to the eukaryotic ribosomal protein eS17 family.

This Pyrococcus abyssi (strain GE5 / Orsay) protein is Small ribosomal subunit protein eS17.